The following is a 258-amino-acid chain: UBX domain-containing protein 2A (258 aa).

Basic and acidic residues predominate over residues 1 to 14 (MKEVDNLDSIKEEW). The segment at 1 to 30 (MKEVDNLDSIKEEWACETGPPDSQPLNDNQ) is disordered. The required for interaction with CHRNA3 stretch occupies residues 1-152 (MKEVDNLDSI…SATPRIVSKA (152 aa)). The interval 1–165 (MKEVDNLDSI…EVDNKSTLSA (165 aa)) is required for inhibition of CHRNA3 ubiquitination and translocation of CHRNA3 to the plasma membrane resulting in an increase in acetylcholine-gated nicotinic acetylcholine receptor currents. Residues 61–125 (QVDVNIKLWK…VEDKKNEVCM (65 aa)) form the SEP domain. Positions 168–258 (LNNLEPITRI…QKTAEPFRKL (91 aa)) are required for interaction with VCP. The UBX domain occupies 170–247 (NLEPITRIQI…DLKNAVIIQR (78 aa)).

Part of a complex composed of STUB1/CHIP, VCP/p97, CHRNA3, and UBXN2A that modulates the ubiquitination and endoplasmic reticulum-associated degradation (ERAD) of CHRNA3. Within the complex UBXN2A acts as a scaffold protein required for the interaction of CHRNA3 with VCP/p97, this interaction also inhibits CHRNA3 ubiquitination by STUB1/CHIP and subsequently ERAD. Interacts (via SEP domain) with CHRNA3 and interacts (via UBX domain) with VCP/P97; these interactions are required for the interaction of CHRNA3 with the STUB1-VCP-UBXN2A complex. Interacts with HSPA9/MOT-2 (via SBD domain); the interaction inhibits HSPA9/MOT-2 interaction with and degradation of p53, thereby promotes p53 translocation to the nucleus. Interacts with RICTOR. In terms of processing, ubiquitinated. As to expression, expressed in the prefrontal cortex (at protein level). Expressed in the habenula and hippocampus (at protein level). Expressed in peripheral ganglia.

The protein resides in the golgi apparatus. It localises to the endoplasmic reticulum. It is found in the perikaryon. The protein localises to the cell projection. Its subcellular location is the dendrite. The protein resides in the nucleus. It localises to the cytoplasm. In terms of biological role, acts to repress the ubiquitination and subsequent endoplasmic reticulum-associated degradation of CHRNA3 by the STUB1-VCP-UBXN2A complex in cortical neurons. Also acts to promote the translocation of CHRNA3 to the plasma membrane and subsequently increases plasma membrane acetylcholine-gated ion-channel activation. Plays a role in the inhibition of STUB1-mediated TP53 degradation, via its interaction with HSPA9 which acts to inhibit TP53 binding to HSPA9. Positively mediates the ubiquitination and proteosomal degradation of RICTOR, may thereby act as a negative regulator of the mTORC2 pathway. This chain is UBX domain-containing protein 2A, found in Mus musculus (Mouse).